Consider the following 206-residue polypeptide: Small ribosomal subunit protein uS4 (206 aa).

The 61-residue stretch at 96-156 (CRLDNVVYRM…EKAKNQLRIV (61 aa)) folds into the S4 RNA-binding domain.

This sequence belongs to the universal ribosomal protein uS4 family. In terms of assembly, part of the 30S ribosomal subunit. Contacts protein S5. The interaction surface between S4 and S5 is involved in control of translational fidelity.

Its function is as follows. One of the primary rRNA binding proteins, it binds directly to 16S rRNA where it nucleates assembly of the body of the 30S subunit. Functionally, with S5 and S12 plays an important role in translational accuracy. This is Small ribosomal subunit protein uS4 from Pseudomonas fluorescens (strain Pf0-1).